A 258-amino-acid polypeptide reads, in one-letter code: Phosphoprotein ECPP44 (258 aa).

Disordered stretches follow at residues 1–25 (MASDDSVPQHSVEKTTEYESSDRGL), 46–131 (EKVQ…PVEV), and 148–175 (KLPGGGKKVEEETVAPPPPPAAAPVDCA). Composition is skewed to basic and acidic residues over residues 11 to 25 (SVEKTTEYESSDRGL), 46 to 80 (EKVQVSEPEPKYEDCKVVEEEEEKAAKPSLLEKLH), 109 to 124 (GLKEKIEEKIHHKEED), and 148 to 158 (KLPGGGKKVEE).

Belongs to the plant dehydrin family. Post-translationally, phosphorylated in embryogenic and somatic embryos. Not phosphorylated in non-embryogenic cells.

Its function is as follows. Phosphorylation of ECCP44 protein is thought to be involved in the acquisition of embryogenic competence. Unlike other dehydrins, it is not thought to function as an environmental stress tolerant. This Daucus carota (Wild carrot) protein is Phosphoprotein ECPP44 (ECPP44).